Here is a 665-residue protein sequence, read N- to C-terminus: MGPSGLLVALALHLAVCSRPHRDYCVLGAGPAGLQMAAFLHRAGRDYEVFERESAPGSFFTRYPRHRKLISINKRHTGKANAEFNLRHDWNSLLSDDPHLLFRHYSQAYFPDASDMVRYLGDFARRLGLHVLYNTNITHVTLDKDPQAWNGHYFILTDQKGQVYQCSVLLVATGLAVPKLVDFPGSEYVEGYESVSVDPEDFVGQNVLILGHGNSAFETAENILGVTNFVHMLSRSRVRLSWATHYVGDVRAINNGLLDTYQLKSLDGLLESDLEYLALVKDSKGKFHVTLKFLLENNSSQSADSIPLPEDDNDNFAMRVAYDRVIRCLGWTFDFSIFDQSLRLSSGTEFSKKYPLIKASYESKGSRGLFILGTASHSVDYRKSAGGFIHGFRYTVRAVHRLLEHRHHGIPWPSTEYPITQLTSSIIRRVNEASGLYQMFSVLADIILLKENATAFEYLEEFPMQMLAQLEMLTGRTARHGLFVINMEYGKNFSGPEKDVFYYDRSVAHIEDAWMSNFLHPVIYYYRHLPTEQDMRFRPAQWPLPRPTAIHHIVEDFLTDWTAPVGHILPLRRFLENCLDTDLRSFYAESCFLFTLTRQRLPPFCQQGYLRMQGLSSTKSLWQHGVESRLLQDYTAMENSNRWLGDHSTAPEPLTQSLDSNKEEL.

An N-terminal signal peptide occupies residues Met1–Cys17. A glycan (N-linked (GlcNAc...) asparagine) is linked at Asn136. Positions Arg642–Leu665 are disordered. The Prevents secretion from ER motif lies at Lys662 to Leu665.

Belongs to the FOXRED2 family. As to quaternary structure, interacts with SEL1L. May interact with OS9 and DNAJC10. Interacts with TXNDC16. Requires FAD as cofactor. In terms of processing, N-glycosylated.

Its subcellular location is the endoplasmic reticulum lumen. Its function is as follows. Probable flavoprotein which may function in endoplasmic reticulum associated degradation (ERAD). May bind non-native proteins in the endoplasmic reticulum and target them to the ubiquitination machinery for subsequent degradation. The sequence is that of FAD-dependent oxidoreductase domain-containing protein 2 from Mus musculus (Mouse).